The sequence spans 396 residues: Acyl-[acyl-carrier-protein] desaturase, chloroplastic (396 aa).

The N-terminal 33 residues, 1–33 (MALKFHPLTSQSPKLPSFRMPQLASLRSPKFVM), are a transit peptide targeting the chloroplast. Residues glutamate 138, glutamate 176, histidine 179, glutamate 229, glutamate 262, and histidine 265 each contribute to the Fe cation site.

The protein belongs to the fatty acid desaturase type 2 family. Homodimer. Fe(2+) serves as cofactor.

The protein localises to the plastid. It localises to the chloroplast. It participates in lipid metabolism; fatty acid metabolism. Its function is as follows. Introduces a cis double bond in the acyl chain of an acyl-[acyl-carrier protein]. In Cucumis sativus (Cucumber), this protein is Acyl-[acyl-carrier-protein] desaturase, chloroplastic.